The chain runs to 365 residues: Phosphopantothenate--cysteine ligase CAB2 (365 aa).

Residues 228–250 (QSGDNGKMGANNDTEGTTRTTPD) form a disordered region. Residues 238–248 (NNDTEGTTRTT) show a composition bias toward polar residues.

This sequence belongs to the PPC synthetase family. Homodimer.

The protein resides in the cytoplasm. Its subcellular location is the nucleus. It carries out the reaction (R)-4'-phosphopantothenate + L-cysteine + CTP = N-[(R)-4-phosphopantothenoyl]-L-cysteine + CMP + diphosphate + H(+). Its pathway is cofactor biosynthesis; coenzyme A biosynthesis; CoA from (R)-pantothenate: step 2/5. Functionally, catalyzes the first step in the biosynthesis of coenzyme A from vitamin B5, where cysteine is conjugated to 4'-phosphopantothenate to form 4-phosphopantothenoylcysteine. In Saccharomyces cerevisiae (strain ATCC 204508 / S288c) (Baker's yeast), this protein is Phosphopantothenate--cysteine ligase CAB2 (CAB2).